Consider the following 162-residue polypeptide: 3-isopropylmalate dehydratase small subunit (162 aa).

Belongs to the LeuD family. LeuD type 2 subfamily. In terms of assembly, heterodimer of LeuC and LeuD.

It carries out the reaction (2R,3S)-3-isopropylmalate = (2S)-2-isopropylmalate. Its pathway is amino-acid biosynthesis; L-leucine biosynthesis; L-leucine from 3-methyl-2-oxobutanoate: step 2/4. In terms of biological role, catalyzes the isomerization between 2-isopropylmalate and 3-isopropylmalate, via the formation of 2-isopropylmaleate. This Pyrobaculum neutrophilum (strain DSM 2338 / JCM 9278 / NBRC 100436 / V24Sta) (Thermoproteus neutrophilus) protein is 3-isopropylmalate dehydratase small subunit.